A 784-amino-acid chain; its full sequence is Transcriptional activator somA (784 aa).

The LisH domain maps to 43–75 (MINNLNTYIYDYFLKRGYHECARALVKDESIKL). A compositionally biased stretch (polar residues) spans 75–84 (LNTEPPTKTS). Disordered stretches follow at residues 75–122 (LNTE…PNLA), 212–295 (GLSQ…SQAL), 424–726 (MMAR…DLSI), and 764–784 (GFDP…GDGL). The segment covering 103-117 (DSKDGDKIKIPDDLP) has biased composition (basic and acidic residues). The span at 215–233 (QQQIAQLQKNQQMHMMQQM) shows a compositional bias: low complexity. Over residues 234 to 244 (QREHSDMDMNG) the composition is skewed to basic and acidic residues. The span at 247–259 (PQSPSSAENAPSP) shows a compositional bias: low complexity. Over residues 453 to 467 (SPQGSRAGTSPNPNE) the composition is skewed to polar residues. Over residues 564–592 (QQQQGQPMGPQQSPAQQPQSTGTPQTQNS) the composition is skewed to low complexity. The segment covering 607–624 (RTSPQSQNAAPPTPQQAN) has biased composition (polar residues). The span at 629–638 (KKREPKDTAR) shows a compositional bias: basic and acidic residues. Composition is skewed to low complexity over residues 644-661 (KQPA…TPSS) and 691-701 (PTTSAPQQPTS). The segment covering 702–715 (APAPQPIVQQPPPD) has biased composition (pro residues).

Belongs to the FLO8 family. Interacts with ptaB.

Its subcellular location is the nucleus. Transcription factor that controls the expression of genes related to the process of conidiation and adherence and regulates biofilm formation. Controls conidiation and adhesion primarily by affecting the expression of the three regulatory genes flbB, stuA and medA. Required for virulence in an egg and a mouse infection model. The protein is Transcriptional activator somA of Aspergillus fumigatus (strain ATCC MYA-4609 / CBS 101355 / FGSC A1100 / Af293) (Neosartorya fumigata).